Consider the following 1017-residue polypeptide: GPI ethanolamine phosphate transferase 3 (1017 aa).

The helical transmembrane segment at 34 to 54 (FYIILLVFIAILQFISIAFFT) threads the bilayer. 5 N-linked (GlcNAc...) asparagine glycosylation sites follow: N66, N71, N100, N182, and N203. The helical transmembrane segment at 347-367 (VSSLALLMGQPIPFNNLGWPI) threads the bilayer. N-linked (GlcNAc...) asparagine glycosylation is present at N411. 6 consecutive transmembrane segments (helical) span residues 457 to 477 (LLATSLVLLISITKLIPSIVV), 484 to 504 (FVPGIIIMVLVTNLCFHGIFY), 515 to 535 (FWGTLLATAIGIIIGCYITIF), 558 to 578 (IAVMFMIIHALLFTSNSFTIW), 582 to 602 (IVAFLLSTFGMLTLYEFVFLP), and 644 to 664 (LGGYHSAVLIIFTRLASMITI). Residues N681 and N682 are each glycosylated (N-linked (GlcNAc...) asparagine). A helical membrane pass occupies residues 685-705 (WWVLGLCFLMIFILPACITGY). The N-linked (GlcNAc...) asparagine glycan is linked to N707. A helical membrane pass occupies residues 715–735 (AAPIWINVFLKGILGLNFVYW). N742 is a glycosylation site (N-linked (GlcNAc...) asparagine). 6 consecutive transmembrane segments (helical) span residues 765 to 785 (IIAGFSLIASNVGWLMGPLCI), 806 to 826 (NIYGSEFFLLVINVLISILLF), 829 to 849 (PLAQLSYFLMCNQLLSILEII), 903 to 923 (IAIILNTFGPHILVSLSVALL), 947 to 967 (GILLTYNTILCLSSFIWVTHF), and 981 to 1001 (FIFASLSLIVTQLVVTFGTIA).

It belongs to the PIGG/PIGN/PIGO family. PIGO subfamily. Glycosylated.

It localises to the endoplasmic reticulum membrane. It participates in glycolipid biosynthesis; glycosylphosphatidylinositol-anchor biosynthesis. In terms of biological role, involved in glycosylphosphatidylinositol-anchor biosynthesis. Transfers ethanolamine phosphate to the GPI third mannose which links the GPI-anchor to the C-terminus of the proteins by an amide bond. Involved in cell wall biosynthesis. In Saccharomyces cerevisiae (strain ATCC 204508 / S288c) (Baker's yeast), this protein is GPI ethanolamine phosphate transferase 3 (GPI13).